Here is a 342-residue protein sequence, read N- to C-terminus: Terpene cyclase resF (342 aa).

The next 5 helical transmembrane spans lie at 5–25, 81–101, 115–135, 151–171, and 182–202; these read VSVV…GVFA, FMAQ…TEDF, WGVF…GVCF, STWI…MLIF, and IWGV…ASLL. N224 carries N-linked (GlcNAc...) asparagine glycosylation. Helical transmembrane passes span 229 to 249, 269 to 289, and 305 to 325; these read YVVA…FHLG, FLQI…WHEL, and YLLL…AWAL.

Belongs to the membrane-bound ascI terpene cyclase family.

Its subcellular location is the membrane. It participates in antifungal biosynthesis. Functionally, cyclase; part of the gene cluster that mediates the biosynthesis of the tetrahydropyranyl antifungal agent restricticin that acts as an inhibitor of CYP51 and blocks the ergosterol biosynthesis. The highly reducing polyketide synthase resH, the short chain dehydrogenase resG, the cyclase resF, the FAD-dependent monooxygenase resA and the enoylreductase resD are required to generate the first stable intermediate desmethylrestrictinol. ResH with resD biosynthesize the first polyketide chain intermediate that is reduced by resG, followed by epoxidation by resA before 6-endo cyclization via epoxide opening by resF leads to desmethylrestrictinol. The methyltransferase resE then catalyzes the C4 O-methylation of desmethylrestrictinol to produce restrictinol, and the nonribosomal peptide synthetase resC catalyzes the C3 esterification of restrictinol with glycine that leads to restricticin. The sequence is that of Terpene cyclase resF from Aspergillus sclerotiorum.